Here is an 821-residue protein sequence, read N- to C-terminus: High affinity potassium transporter (821 aa).

Positions 1–10 (MSDSQSNKQN) are enriched in polar residues. The disordered stretch occupies residues 1–47 (MSDSQSNKQNQGEDDNNVSSSIESNENYPFRLNDEESEPQSSTTESM). Residues 1–57 (MSDSQSNKQNQGEDDNNVSSSIESNENYPFRLNDEESEPQSSTTESMLKAKKQSWRQ) lie on the Cytoplasmic side of the membrane. Low complexity predominate over residues 17–27 (NVSSSIESNEN). A helical membrane pass occupies residues 58–78 (VLMLGFSSLGAIYGDIGTSPL). Residues 79–101 (YVLNSIKYPNSSPTEEDIYGAIS) lie on the Extracellular side of the membrane. The chain crosses the membrane as a helical span at residues 102-122 (IIFYLFTFIVIFKYILIVLFL). Residues 123–190 (GTNDGEGGQV…KASGFKTNPK (68 aa)) lie on the Cytoplasmic side of the membrane. Residues 191-211 (LIKFISKFILFGCFFGCSLVM) form a helical membrane-spanning segment. The Extracellular segment spans residues 212–238 (SDGLLTPTTSVLSAIAGIQIANPSFND). Residues 239 to 259 (VLAVSEVVLIVLFLIQQFGSN) form a helical membrane-spanning segment. Lys-260 is a topological domain (cytoplasmic). Residues 261 to 281 (ISFTFAPIIFLWLIGLIISGI) form a helical membrane-spanning segment. The Extracellular segment spans residues 282–306 (YNIVKFHPAVFKSLSPYYAIQLLKH). Residues 307 to 327 (SGIDVFSGAMLSITGTEAMFA) traverse the membrane as a helical segment. The Cytoplasmic segment spans residues 328 to 340 (DVGHFGRLPIQLT). The helical transmembrane segment at 341–361 (LTLFVYPALIICYLGQGAYII) threads the bilayer. Topologically, residues 362–386 (KHPEALSNPFFYSIPGGLNSWIYWV) are extracellular. Residues 387-407 (MFVLATLSTIIASQALILGVF) traverse the membrane as a helical segment. Over 408–434 (SITSQLINLDCFPNFKIIHVSKKYAGK) the chain is Cytoplasmic. Residues 435–455 (VYIPAINWLLMIGVCATTAGF) traverse the membrane as a helical segment. Over 456–463 (KNSNNVTA) the chain is Extracellular. Residue Asn-460 is glycosylated (N-linked (GlcNAc...) asparagine). A helical membrane pass occupies residues 464-484 (AYGLGITLDFLVTSSLIMVCM). Topologically, residues 485–491 (TYVYNWN) are cytoplasmic. The helical transmembrane segment at 492–512 (ILIPITYALIFLPLEVIMVIS) threads the bilayer. Residues 513 to 516 (NLKK) lie on the Extracellular side of the membrane. The helical transmembrane segment at 517–537 (ITHGAWFPLMMSGIFMMFLSF) threads the bilayer. Residues 538–821 (WRWARSRKVN…KMFLGGVVRI (284 aa)) are Cytoplasmic-facing.

It belongs to the HAK/KUP transporter (TC 2.A.72) family.

Its subcellular location is the membrane. Major high-affinity potassium uptake protein. This Schwanniomyces occidentalis (Yeast) protein is High affinity potassium transporter (HAK1).